The chain runs to 354 residues: 3-dehydroquinate synthase (354 aa).

Residues 61–66 (DGESTK), 119–120 (TT), lysine 132, lysine 141, and 159–162 (FLET) each bind NAD(+). Residues glutamate 174, histidine 238, and histidine 254 each coordinate Zn(2+).

This sequence belongs to the sugar phosphate cyclases superfamily. Dehydroquinate synthase family. The cofactor is NAD(+). Requires Co(2+) as cofactor. Zn(2+) serves as cofactor.

Its subcellular location is the cytoplasm. The catalysed reaction is 7-phospho-2-dehydro-3-deoxy-D-arabino-heptonate = 3-dehydroquinate + phosphate. Its pathway is metabolic intermediate biosynthesis; chorismate biosynthesis; chorismate from D-erythrose 4-phosphate and phosphoenolpyruvate: step 2/7. Functionally, catalyzes the conversion of 3-deoxy-D-arabino-heptulosonate 7-phosphate (DAHP) to dehydroquinate (DHQ). The protein is 3-dehydroquinate synthase of Saccharolobus solfataricus (strain ATCC 35092 / DSM 1617 / JCM 11322 / P2) (Sulfolobus solfataricus).